Reading from the N-terminus, the 1090-residue chain is Exocyst complex component SEC5B (1090 aa).

Over residues 1-12 the composition is skewed to acidic residues; sequence MSSSDDLDEDEL. The segment at 1–126 is disordered; the sequence is MSSSDDLDED…ARKEDDRAWD (126 aa). Residues 23–46 are compositionally biased toward polar residues; it reads RDVTYQKPPSANSRKPVTNLVQQP. Low complexity predominate over residues 52-62; that stretch reads AAAPPSKGGAK. A compositionally biased stretch (gly residues) spans 96–109; it reads GGGGDGGGGRGRGG. The segment covering 110–126 has biased composition (basic and acidic residues); that stretch reads SGKERGRARKEDDRAWD. Serine 179 bears the Phosphoserine mark. Residues 486-502 are compositionally biased toward polar residues; sequence VQLSDDTSSMEDNQVQV. Disordered regions lie at residues 486-511, 984-1013, and 1055-1090; these read VQLS…ESAR, ETVE…QSSV, and PVAK…PRRR. Positions 999–1010 are enriched in basic and acidic residues; sequence RGSEDAISDDKQ. Over residues 1062–1071 the composition is skewed to polar residues; it reads SRTSTDSPSR.

This sequence belongs to the SEC5 family. As to quaternary structure, the exocyst complex is composed of SEC3, SEC5, SEC6, SEC8, SEC10, EXO70A1 and EXO84B.

Its function is as follows. Component of the exocyst complex involved in the docking of exocytic vesicles with fusion sites on the plasma membrane during regulated or polarized secretion. Involved in polarized cell growth and organ morphogenesis. During cytokinesis, involved in cell plate initiation, cell plate maturation and formation of new primary cell wall. The protein is Exocyst complex component SEC5B (SEC5B) of Arabidopsis thaliana (Mouse-ear cress).